The primary structure comprises 286 residues: MMKQNPILITGGTGTVGSRIASRLIKLGYRVRIASRKKGALADAEYVYFNWKYASSFTPALEQVKQIYLVAPVGVFDPAPYVLPFLKEAKRLGAKRVVMQSASVVSENGPVFGALHQAVREFPEWTVLRPSYFMQNFINVQHRMSIQTEGRITTASGEGKLGFIDADDIAETAVRALIDDVPHQTHHILTGPEALSYAEAAEIIGAAAGRRVEHVSISRSELQHKMEAGGLPADYAHFMAKLDEAISHGAEHRVTDTVKRVTGKEPRSLSEFAAAHAAYWTSFWTE.

It belongs to the NmrA-type oxidoreductase family.

This is an uncharacterized protein from Bacillus subtilis (strain 168).